We begin with the raw amino-acid sequence, 716 residues long: MNNFRATILFWAVAAWVTSGKPLGEMDEVGVQKCKNALKLPVLEVLPGGGWDNLRNVDMGRVMELTYSNCRTTEDGQYIIPDEIFTIPQKQSNLEMNSEILESWANYQSSTSYSINTELSLFSKVNGKFSTEFQRMKTLQLKDQAITTRVQVRNLIYTVKINPALELNWSFRKELLDISDRLENNQTRMATYLAELLVLNYGTHVITSVDAGAALIQEDHIRASFLQDSQSSRSAVTASAGLAFQNTVNFKFEENYTSQNVLTKSYLSNRTNSRVQSIGGVPFYPGITLQAWQQGITNHLVAIDRSGLPLHFFINPNMLPDLPGPLVKKVSKTVETAVKRYYTFNTYPGCTDLNSPNFNFQANTDDGSCEGKMTNFSFGGVYQECTQLSGNRDVLLCQKLEQKNPLTGDFSCPSGYSPVRLLSQIHEEGYNHLECHRKCTLLVFCKTVCEDVFQVAKAEFRAFWCVASSQVPENSGLLFGGLFSSKSINPMTNAQSCPAGYFPLSLFENLKVCVSQDYELGSRFAVPFGGFFSCTVGNPLVDPAISRDLGVPSLKKCPGGFSQHLALISDGCQVSYCVKSGLFTGGSLPPARLPPFTRPPLMSQAATNTVIVTNSENARSWIKDSQTHQWRLGEPIELRRAMNDIHGDGGGLSGGAAAGVTLGVTTILAVVITLAIYGTRKFKKKAYQAIEERQSLVPGTAATGDTTYQEQGQSPA.

Positions 1-20 are cleaved as a signal peptide; sequence MNNFRATILFWAVAAWVTSG. An MACPF domain is found at 30 to 345; sequence GVQKCKNALK…TAVKRYYTFN (316 aa). Residues C34 and C70 are joined by a disulfide bond. 2 beta stranded membrane-spanning segments follow: residues 113 to 120 and 127 to 132; these read YSINTELS and GKFSTE. N-linked (GlcNAc...) asparagine glycosylation is found at N168 and N185. 2 beta stranded membrane passes run 235–244 and 248–256; these read AVTASAGLAF and VNFKFEENY. A glycan (N-linked (GlcNAc...) asparagine) is linked at N269. C350 and C369 are disulfide-bonded. N-linked (GlcNAc...) asparagine glycosylation occurs at N375. 5 disulfide bridges follow: C385–C397, C435–C449, C439–C445, C534–C572, and C557–C577. A P2 region spans residues 413–656; that stretch reads PSGYSPVRLL…GDGGGLSGGA (244 aa). Residues 656–676 form a helical membrane-spanning segment; that stretch reads AAAGVTLGVTTILAVVITLAI. Residues 693–716 form a disordered region; it reads RQSLVPGTAATGDTTYQEQGQSPA. Over residues 703 to 716 the composition is skewed to polar residues; sequence TGDTTYQEQGQSPA.

It belongs to the MPEG1 family. Homooligomer; predominantly forms a homooligomeric arc-shaped pore complex instead of complete rings of 16 subunits. Post-translationally, proteolytically processed in two steps to generate the Macrophage-expressed gene 1 protein, processed form: cleaved by trypsin in proximity of the helical transmembrane domain releases the ectodomain into the lysosomal lumen to orient the pore-forming domain toward the endogenous membranes, and processed by the asparagine endopeptidase (LGMN). Proteolytic processing in antigen-containing vesicles is pH-dependent. Monoubiquitinated in response to bacterial infection; ubiquitination is required for vesicular localization and antibacterial activity and can be blocked by bacterial cell cycle inhibiting factor (cif).

Its subcellular location is the cytoplasmic vesicle membrane. The protein resides in the cytoplasmic vesicle. It localises to the phagosome membrane. With respect to regulation, forms arc- and ring-shaped pre-pores on top of the membrane at neutral to slightly acidic pH conditions and converts to pores upon acidification. Undergoes transition from the pre-pore to the pore in a processive clockwise hand-over-hand process. In the pore state, 2 alpha-helical regions refold into transmembrane hairpins (TMH1 and TMH2) in each protomer that form in the ensemble complex giant beta-barrel transmembrane pores. In terms of biological role, pore-forming protein involved in both innate and adaptive immunity. Plays a central role in antigen cross-presentation in dendritic cells by forming a pore in antigen-containing compartments, thereby promoting delivery of antigens for cross-presentation. Also involved in innate immune response following bacterial infection; shows antibacterial activity against a wide spectrum of Gram-positive, Gram-negative and acid-fast bacteria. Reduces the viability of the intracytosolic pathogen L.monocytogenes by inhibiting acidification of the phagocytic vacuole of host cells which restricts bacterial translocation from the vacuole to the cytosol. Required for the antibacterial activity of reactive oxygen species and nitric oxide. Functionally, pore-forming protein that plays a central role in antigen cross-presentation in dendritic cells by mediating delivery of antigens for cross-presentation. Dendritic cells bridge innate and adaptive immunity by capturing exogenous antigens on MHC class-I molecules and presenting them to naive CD8(+) T-cells. Acts by forming a pore in antigen-containing compartments, promoting the release of antigens into the cytosol, enabling generation of MHCI:peptide complexes and T-cell priming. The polypeptide is Macrophage-expressed gene 1 protein (MPEG1) (Pongo abelii (Sumatran orangutan)).